A 335-amino-acid polypeptide reads, in one-letter code: Selenide, water dikinase (335 aa).

The active site involves selenocysteine 7. Selenocysteine 7 is a non-standard amino acid (selenocysteine). ATP contacts are provided by residues lysine 10 and 36 to 38; that span reads LGD. Aspartate 39 lines the Mg(2+) pocket. ATP-binding positions include aspartate 55, aspartate 78, and 126–128; that span reads GHT. Position 78 (aspartate 78) interacts with Mg(2+). A Mg(2+)-binding site is contributed by aspartate 232.

This sequence belongs to the selenophosphate synthase 1 family. Class I subfamily. Homodimer. Mg(2+) serves as cofactor.

The enzyme catalyses hydrogenselenide + ATP + H2O = selenophosphate + AMP + phosphate + 2 H(+). In terms of biological role, synthesizes selenophosphate from selenide and ATP. The sequence is that of Selenide, water dikinase from Methanococcus maripaludis (strain DSM 14266 / JCM 13030 / NBRC 101832 / S2 / LL).